The following is a 348-amino-acid chain: Nicotinate-nucleotide--dimethylbenzimidazole phosphoribosyltransferase (348 aa).

E316 acts as the Proton acceptor in catalysis.

The protein belongs to the CobT family.

It carries out the reaction 5,6-dimethylbenzimidazole + nicotinate beta-D-ribonucleotide = alpha-ribazole 5'-phosphate + nicotinate + H(+). It participates in nucleoside biosynthesis; alpha-ribazole biosynthesis; alpha-ribazole from 5,6-dimethylbenzimidazole: step 1/2. Its function is as follows. Catalyzes the synthesis of alpha-ribazole-5'-phosphate from nicotinate mononucleotide (NAMN) and 5,6-dimethylbenzimidazole (DMB). The protein is Nicotinate-nucleotide--dimethylbenzimidazole phosphoribosyltransferase of Xanthomonas campestris pv. campestris (strain 8004).